We begin with the raw amino-acid sequence, 161 residues long: Large ribosomal subunit protein uL10 (161 aa).

Belongs to the universal ribosomal protein uL10 family. As to quaternary structure, part of the ribosomal stalk of the 50S ribosomal subunit. The N-terminus interacts with L11 and the large rRNA to form the base of the stalk. The C-terminus forms an elongated spine to which L12 dimers bind in a sequential fashion forming a multimeric L10(L12)X complex.

In terms of biological role, forms part of the ribosomal stalk, playing a central role in the interaction of the ribosome with GTP-bound translation factors. The sequence is that of Large ribosomal subunit protein uL10 from Campylobacter fetus subsp. fetus (strain 82-40).